The following is a 23-amino-acid chain: Alyteserin-1c (23 aa).

Residue S23 is modified to Serine amide.

Expressed by the skin glands.

The protein localises to the secreted. It is found in the target cell membrane. Functionally, antibacterial peptide with amphipathic alpha-helical structure that shows selective growth-inhibitory activity against Gram-negative bacteria but low hemolytic activity against human erythrocytes (LC(50)=145-220 uM). It is moderately active against the Gram-negative bacteria E.coli (MIC=25 uM), K.pneumoniae (MIC=50 uM), P.aeruginosa (MIC=25 uM), A.baumannii (MIC=6 uM), and is weaky active against the Gram-positive S.aureus (MIC=100-250 uM). This chain is Alyteserin-1c, found in Alytes obstetricans (Common midwife toad).